Here is a 193-residue protein sequence, read N- to C-terminus: Peptidyl-tRNA hydrolase 1 (193 aa).

Tyrosine 27 provides a ligand contact to tRNA. Histidine 32 (proton acceptor) is an active-site residue. TRNA-binding residues include phenylalanine 80, asparagine 82, and asparagine 128.

This sequence belongs to the PTH family. In terms of assembly, monomer.

It is found in the cytoplasm. The catalysed reaction is an N-acyl-L-alpha-aminoacyl-tRNA + H2O = an N-acyl-L-amino acid + a tRNA + H(+). Functionally, hydrolyzes ribosome-free peptidyl-tRNAs (with 1 or more amino acids incorporated), which drop off the ribosome during protein synthesis, or as a result of ribosome stalling. In terms of biological role, catalyzes the release of premature peptidyl moieties from peptidyl-tRNA molecules trapped in stalled 50S ribosomal subunits, and thus maintains levels of free tRNAs and 50S ribosomes. This is Peptidyl-tRNA hydrolase 1 from Corynebacterium jeikeium (strain K411).